The following is a 347-amino-acid chain: P2Y purinoceptor 12 (347 aa).

The Extracellular portion of the chain corresponds to 1–33 (MDVPGVNTTSANTTFSPGTSTLCVRDYKITQVL). N-linked (GlcNAc...) asparagine glycosylation is found at N7 and N12. Intrachain disulfides connect C23-C276 and C103-C181. A helical transmembrane segment spans residues 34 to 56 (FPLLYTVLFFAGLITNSLAMRIF). Residues 57–67 (FQIRSKSNFII) lie on the Cytoplasmic side of the membrane. A phosphoserine mark is found at S61 and S63. A helical membrane pass occupies residues 68 to 88 (FLKNTVISDLLMILTFPFKIL). At 89-103 (SDAKLGAGPLRTLVC) the chain is on the extracellular side. Residues R99, C103, and Y111 each coordinate ADP. The helical transmembrane segment at 104–124 (QVTSVTFYFTMYISISFLGLI) threads the bilayer. The Cytoplasmic segment spans residues 125 to 148 (TIDRYLKTTRPFKTSSPSNLLGAK). Residues 149-168 (ILSVVIWAFMFLISLPNMIL) form a helical membrane-spanning segment. ADP contacts are provided by residues 162–165 (SLPN), 181–185 (CSFLK), H193, and N197. The Extracellular segment spans residues 169-191 (TNRRPKDKDVTKCSFLKSEFGLV). A helical membrane pass occupies residues 192–213 (WHEIVNYICQVIFWINFLIVIV). The Cytoplasmic portion of the chain corresponds to 214–239 (CYSLITKELYRSYVRTRGSAKVPKKK). The helical transmembrane segment at 240 to 265 (VNVKVFIIIAVFFICFVPFHFARIPY) threads the bilayer. ADP contacts are provided by residues 262-265 (RIPY), Q269, and K286. The Extracellular segment spans residues 266 to 284 (TLSQTRAVFDCSAENTLFY). A helical membrane pass occupies residues 285–304 (VKESTLWLTSLNACLDPFIY). At 305 to 347 (FFLCKSFRNSLTSMLRCSNSTSTSGTNKKKGQEGGEPSEETPM) the chain is on the cytoplasmic side. The segment at 321 to 347 (CSNSTSTSGTNKKKGQEGGEPSEETPM) is disordered.

Belongs to the G-protein coupled receptor 1 family.

Its subcellular location is the cell membrane. Its function is as follows. Receptor for ADP and ATP coupled to G-proteins that inhibit the adenylyl cyclase second messenger system. Required for normal platelet aggregation and blood coagulation. The protein is P2Y purinoceptor 12 (P2ry12) of Mus musculus (Mouse).